The following is a 309-amino-acid chain: MITTVVGSYPATPREPETLRERISSFIGSYDACRPAIETAVRDQVRAGVDIISDGQVRGDMVGHFAEAMGGMMVKDGVSIIFSRITPPAGSIGSDDLIYAIKILRKLTDDESKGVKGIITGPSTMAHASKIEGFYSPQKRERAIMDMADALRVEAEHLQDAGALMIQIDEPFLSTGMVDMGTARRAVKRISGALDVDVSLHVCGDISGVIGELLTFPVDMLDLEFAGRPSNLEVLAEKWRGDKKLGFGCVDTSTEVVESTDTIKNLIERGADIAGEDNLYIDPDCGMRKLPREAAFSKLRNMVKAASEF.

Positions 201, 203, 224, and 285 each coordinate Zn(2+).

The protein belongs to the archaeal MetE family. The cofactor is Zn(2+).

It participates in amino-acid biosynthesis; L-methionine biosynthesis via de novo pathway. With respect to regulation, is activated by phosphates. Catalyzes the transfer of a methyl group to L-homocysteine resulting in methionine formation. Can use methylcobalamin and methylcobinamide as methyl donors, but methylcobalamin is not considered to be the physiological substrate. It was proposed that, in vivo, a so-far-unidentified enzyme catalyzes methyltransfer from 5-methyltetrahydromethanopterin (5-CH3-H4MPT) to a corrinoid protein, and that the MetE gene product catalyzes the further transfer to L-homocysteine. Is not active with L-cysteine, coenzyme M, coenzyme B, glutathione or dithiothreitol as substrate. This Methanothermobacter marburgensis (strain ATCC BAA-927 / DSM 2133 / JCM 14651 / NBRC 100331 / OCM 82 / Marburg) (Methanobacterium thermoautotrophicum) protein is Methionine synthase.